Consider the following 1222-residue polypeptide: ATP-dependent helicase/nuclease subunit A (1222 aa).

The UvrD-like helicase ATP-binding domain occupies 39-495 (QKRTAQQIEA…ILLKENFRSQ (457 aa)). 60–67 (ASAGSGKT) contributes to the ATP binding site. The 287-residue stretch at 524-810 (QLIAGSHAQT…NLMTIHKSKG (287 aa)) folds into the UvrD-like helicase C-terminal domain.

This sequence belongs to the helicase family. AddA subfamily. Heterodimer of AddA and AddB/RexB. Mg(2+) serves as cofactor.

The enzyme catalyses Couples ATP hydrolysis with the unwinding of duplex DNA by translocating in the 3'-5' direction.. It carries out the reaction ATP + H2O = ADP + phosphate + H(+). In terms of biological role, the heterodimer acts as both an ATP-dependent DNA helicase and an ATP-dependent, dual-direction single-stranded exonuclease. Recognizes the chi site generating a DNA molecule suitable for the initiation of homologous recombination. The AddA nuclease domain is required for chi fragment generation; this subunit has the helicase and 3' -&gt; 5' nuclease activities. This chain is ATP-dependent helicase/nuclease subunit A, found in Streptococcus pyogenes serotype M12 (strain MGAS9429).